A 285-amino-acid chain; its full sequence is Foldase protein PrsA 2 (285 aa).

Positions 1–20 (MRGKHIFIITALISILMLAA) are cleaved as a signal peptide. The N-palmitoyl cysteine moiety is linked to residue C21. C21 carries S-diacylglycerol cysteine lipidation. Positions 134–224 (KPEIKASHIL…NGYHIIKLTG (91 aa)) constitute a PpiC domain.

It belongs to the PrsA family.

The protein resides in the cell membrane. It carries out the reaction [protein]-peptidylproline (omega=180) = [protein]-peptidylproline (omega=0). Plays a major role in protein secretion by helping the post-translocational extracellular folding of several secreted proteins. Important for the secretion of the protective antigen. The three PsrA proteins in this organism show different but overlapping substrate specificities. The sequence is that of Foldase protein PrsA 2 (prsA2) from Bacillus anthracis.